The sequence spans 116 residues: Ferredoxin-like protein in nif region (116 aa).

The 4Fe-4S ferredoxin-type domain occupies 2–29; it reads AYTITSQCISCKLCSSVCPTGAIKIAEN. The iron-sulfur cluster site is built by cysteine 9, cysteine 12, cysteine 15, and cysteine 19.

In Nostoc sp. (strain PCC 7120 / SAG 25.82 / UTEX 2576), this protein is Ferredoxin-like protein in nif region (fdxN).